A 142-amino-acid chain; its full sequence is Large ribosomal subunit protein uL13 (142 aa).

This sequence belongs to the universal ribosomal protein uL13 family. Part of the 50S ribosomal subunit.

Its function is as follows. This protein is one of the early assembly proteins of the 50S ribosomal subunit, although it is not seen to bind rRNA by itself. It is important during the early stages of 50S assembly. The sequence is that of Large ribosomal subunit protein uL13 from Francisella tularensis subsp. mediasiatica (strain FSC147).